The following is a 173-amino-acid chain: T-cell receptor beta-1 chain C region (173 aa).

Positions glutamate 1–glutamate 146 are c region. Residues cysteine 31 and cysteine 71 are joined by a disulfide bond. N-linked (GlcNAc...) asparagine glycosylation is found at asparagine 67 and asparagine 116. The helical transmembrane segment at glutamate 146–methionine 167 threads the bilayer. Residues valine 168–serine 173 are Cytoplasmic-facing.

It is found in the membrane. This is T-cell receptor beta-1 chain C region from Mus musculus (Mouse).